The following is a 410-amino-acid chain: F-box protein At5g36730 (410 aa).

Residues 1–46 form the F-box domain; that stretch reads MAMSNLPRDLLEEVLSRVPVKSIAAVRSTCKNWNSLTYGQSFTKKL.

This chain is F-box protein At5g36730, found in Arabidopsis thaliana (Mouse-ear cress).